We begin with the raw amino-acid sequence, 844 residues long: Probable inorganic carbon transporter subunit DabA 1 (844 aa).

Residues cysteine 359, aspartate 361, histidine 543, and cysteine 558 each contribute to the Zn(2+) site.

This sequence belongs to the inorganic carbon transporter (TC 9.A.2) DabA family. In terms of assembly, forms a complex with DabB. Requires Zn(2+) as cofactor.

It is found in the cell inner membrane. Part of an energy-coupled inorganic carbon pump. This chain is Probable inorganic carbon transporter subunit DabA 1, found in Bradyrhizobium sp. (strain BTAi1 / ATCC BAA-1182).